The sequence spans 168 residues: MSNRRKSNKLKEKETDWQERVVQIRRVTKVVKGGKKLSFRAILIIGNEKGEVGVGVGKASDVIGAVKKAVSDGKKKIVSVPITKDSSIPHIVKGRSGAAKVIMRPSAPGSGVIAGGSVRTILELAGVKNILAKQLGSNNPLNNARAATDALLKLKTFSQVAQDRGITS.

The S5 DRBM domain maps to tryptophan 17–valine 80.

The protein belongs to the universal ribosomal protein uS5 family. In terms of assembly, part of the 30S ribosomal subunit. Contacts protein S4.

The protein localises to the plastid. The protein resides in the chloroplast. With S4 and S12 plays an important role in translational accuracy. The protein is Small ribosomal subunit protein uS5c (rps5) of Rhodomonas salina (Cryptomonas salina).